The chain runs to 287 residues: Acetyl-coenzyme A carboxylase carboxyl transferase subunit beta (287 aa).

The 252-residue stretch at 36-287 folds into the CoA carboxyltransferase N-terminal domain; that stretch reads MWVKCDRCGK…KVLYKILELH (252 aa). Zn(2+) is bound by residues cysteine 40, cysteine 43, cysteine 59, and cysteine 62. The C4-type zinc-finger motif lies at 40–62; sequence CDRCGKTLYKKDLDENLKVCKFC.

The protein belongs to the AccD/PCCB family. As to quaternary structure, acetyl-CoA carboxylase is a heterohexamer composed of biotin carboxyl carrier protein (AccB), biotin carboxylase (AccC) and two subunits each of ACCase subunit alpha (AccA) and ACCase subunit beta (AccD). Zn(2+) is required as a cofactor.

The protein resides in the cytoplasm. It catalyses the reaction N(6)-carboxybiotinyl-L-lysyl-[protein] + acetyl-CoA = N(6)-biotinyl-L-lysyl-[protein] + malonyl-CoA. It participates in lipid metabolism; malonyl-CoA biosynthesis; malonyl-CoA from acetyl-CoA: step 1/1. Component of the acetyl coenzyme A carboxylase (ACC) complex. Biotin carboxylase (BC) catalyzes the carboxylation of biotin on its carrier protein (BCCP) and then the CO(2) group is transferred by the transcarboxylase to acetyl-CoA to form malonyl-CoA. The chain is Acetyl-coenzyme A carboxylase carboxyl transferase subunit beta from Clostridium novyi (strain NT).